The chain runs to 247 residues: Caffeoyl-CoA O-methyltransferase (247 aa).

Lysine 21 provides a ligand contact to substrate. S-adenosyl-L-methionine contacts are provided by residues threonine 63, glutamate 85, 87–88, serine 93, aspartate 111, and alanine 140; that span reads GV. Substrate is bound at residue aspartate 163. Aspartate 163 serves as a coordination point for a divalent metal cation. Aspartate 165 is a binding site for S-adenosyl-L-methionine. A divalent metal cation is bound by residues aspartate 189 and asparagine 190. Asparagine 194 is a substrate binding site.

It belongs to the class I-like SAM-binding methyltransferase superfamily. Cation-dependent O-methyltransferase family. CCoAMT subfamily. A divalent metal cation is required as a cofactor.

The enzyme catalyses (E)-caffeoyl-CoA + S-adenosyl-L-methionine = (E)-feruloyl-CoA + S-adenosyl-L-homocysteine + H(+). It participates in aromatic compound metabolism; phenylpropanoid biosynthesis. Its function is as follows. Methylates caffeoyl-CoA to feruloyl-CoA and 5-hydroxyferuloyl-CoA to sinapoyl-CoA. Plays a role in the synthesis of feruloylated polysaccharides. Involved in the reinforcement of the plant cell wall. Also involved in the responding to wounding or pathogen challenge by the increased formation of cell wall-bound ferulic acid polymers. The protein is Caffeoyl-CoA O-methyltransferase of Populus tremuloides (Quaking aspen).